The following is a 169-amino-acid chain: Photosystem I assembly protein Ycf3 (169 aa).

3 TPR repeats span residues 35–68 (AFSY…EIDP), 72–105 (SYIL…NPAL), and 120–153 (GEQA…APSN).

Belongs to the Ycf3 family.

It localises to the plastid. The protein resides in the chloroplast thylakoid membrane. Functionally, essential for the assembly of the photosystem I (PSI) complex. May act as a chaperone-like factor to guide the assembly of the PSI subunits. This chain is Photosystem I assembly protein Ycf3, found in Chaetosphaeridium globosum (Charophycean green alga).